The chain runs to 211 residues: Probable nicotinate-nucleotide adenylyltransferase (211 aa).

This sequence belongs to the NadD family.

It carries out the reaction nicotinate beta-D-ribonucleotide + ATP + H(+) = deamido-NAD(+) + diphosphate. It functions in the pathway cofactor biosynthesis; NAD(+) biosynthesis; deamido-NAD(+) from nicotinate D-ribonucleotide: step 1/1. Its function is as follows. Catalyzes the reversible adenylation of nicotinate mononucleotide (NaMN) to nicotinic acid adenine dinucleotide (NaAD). The polypeptide is Probable nicotinate-nucleotide adenylyltransferase (Corynebacterium kroppenstedtii (strain DSM 44385 / JCM 11950 / CIP 105744 / CCUG 35717)).